Reading from the N-terminus, the 98-residue chain is NADH-ubiquinone oxidoreductase chain 4L (98 aa).

A run of 3 helical transmembrane segments spans residues 1-21, 26-46, and 61-81; these read MNLI…GLIF, IINI…LFVL, and LYIL…VVIL.

It belongs to the complex I subunit 4L family.

Its subcellular location is the mitochondrion membrane. It carries out the reaction a ubiquinone + NADH + 5 H(+)(in) = a ubiquinol + NAD(+) + 4 H(+)(out). In terms of biological role, core subunit of the mitochondrial membrane respiratory chain NADH dehydrogenase (Complex I) that is believed to belong to the minimal assembly required for catalysis. Complex I functions in the transfer of electrons from NADH to the respiratory chain. The immediate electron acceptor for the enzyme is believed to be ubiquinone. The chain is NADH-ubiquinone oxidoreductase chain 4L (nad4L) from Dictyostelium discoideum (Social amoeba).